We begin with the raw amino-acid sequence, 374 residues long: PqqA peptide cyclase (374 aa).

A Radical SAM core domain is found at 4–224 (IEPPMGLLAE…ERLKGVMVID (221 aa)). Positions 18, 22, and 25 each coordinate [4Fe-4S] cluster.

Belongs to the radical SAM superfamily. PqqE family. As to quaternary structure, interacts with PqqD. The interaction is necessary for activity of PqqE. It depends on [4Fe-4S] cluster as a cofactor.

The enzyme catalyses [PQQ precursor protein] + S-adenosyl-L-methionine = E-Y cross-linked-[PQQ precursor protein] + 5'-deoxyadenosine + L-methionine + H(+). The protein operates within cofactor biosynthesis; pyrroloquinoline quinone biosynthesis. Catalyzes the cross-linking of a glutamate residue and a tyrosine residue in the PqqA protein as part of the biosynthesis of pyrroloquinoline quinone (PQQ). The chain is PqqA peptide cyclase from Granulibacter bethesdensis (strain ATCC BAA-1260 / CGDNIH1).